Consider the following 108-residue polypeptide: uncharacterized protein (108 aa).

Residues C7–F106 form the HTH hxlR-type domain.

This is an uncharacterized protein from Bacillus subtilis (strain 168).